Here is a 248-residue protein sequence, read N- to C-terminus: MENFKGLQKSLYIWTDSADLDKRVEQLKSATGGDVALENVHRLSFSSYANSSFDLIVIECAQLTDSYVKLLHMLKPSGKLHLVSFIGPAASLLQEIKLSGFINCREDSPDALTAEKPGYETGSSARLSFAKKNASAINVWKISGDDEELIDEEELLDEEDKQKPDPAGLRVCSTTGKRKACKNCSCGLAEELETEKQSQKATENAKSSCGNCYLGDAFRCSTCPYLGMPAFKPGEKVQLGDNLLKSDI.

Residues 4–129 (FKGLQKSLYI…ETGSSARLSF (126 aa)) are N-terminal SAM-like domain. The interval 130 to 161 (AKKNASAINVWKISGDDEELIDEEELLDEEDK) is linker. [2Fe-2S] cluster-binding residues include cysteine 172, cysteine 181, cysteine 184, and cysteine 186. The segment at 172–186 (CSTTGKRKACKNCSC) is fe-S binding site A. [4Fe-4S] cluster is bound by residues cysteine 209, cysteine 212, cysteine 220, and cysteine 223. 2 consecutive short sequence motifs (cx2C motif) follow at residues 209–212 (CGNC) and 220–223 (CSTC). The tract at residues 209 to 223 (CGNCYLGDAFRCSTC) is fe-S binding site B.

It belongs to the anamorsin family. In terms of assembly, monomer. [2Fe-2S] cluster is required as a cofactor. [4Fe-4S] cluster serves as cofactor.

It is found in the cytoplasm. The protein resides in the mitochondrion intermembrane space. In terms of biological role, component of the cytosolic iron-sulfur (Fe-S) protein assembly (CIA) machinery. Required for the maturation of extramitochondrial Fe-S proteins. Part of an electron transfer chain functioning in an early step of cytosolic Fe-S biogenesis, facilitating the de novo assembly of a [4Fe-4S] cluster on the cytosolic Fe-S scaffold complex. Electrons are transferred from NADPH via a FAD- and FMN-containing diflavin oxidoreductase. Together with the diflavin oxidoreductase, also required for the assembly of the diferric tyrosyl radical cofactor of ribonucleotide reductase (RNR), probably by providing electrons for reduction during radical cofactor maturation in the catalytic small subunit. In Drosophila erecta (Fruit fly), this protein is Anamorsin homolog.